The primary structure comprises 190 residues: LIM domain-containing protein WLIM1 (190 aa).

Alanine 2 carries the N-acetylalanine modification. An LIM zinc-binding 1 domain is found at glutamine 8–arginine 68. Positions lysine 74–lysine 98 are disordered. Positions glycine 83 to alanine 95 are enriched in basic and acidic residues. In terms of domain architecture, LIM zinc-binding 2 spans glutamate 108–glutamate 168.

Interacts with F-actin. As to expression, expressed in roots, leaves, stems, flowers and siliques. Not detected in pollen.

Its subcellular location is the cytoplasm. It is found in the cytoskeleton. Binds to actin filaments and promotes cross-linking into thick bundles. Has an actin-stabilizing activity. The actin regulatory activities are not regulated by pH and [Ca(2+)]. The polypeptide is LIM domain-containing protein WLIM1 (Arabidopsis thaliana (Mouse-ear cress)).